Consider the following 320-residue polypeptide: Cytochrome f (320 aa).

The signal sequence occupies residues 1–35 (MQTRNAFSWLKKQITRSISVSLMIYILTRTSISSA). Residues tyrosine 36, cysteine 56, cysteine 59, and histidine 60 each contribute to the heme site. A helical membrane pass occupies residues 286–306 (AQGLLFFLASVILAQIFLVLK).

Belongs to the cytochrome f family. As to quaternary structure, the 4 large subunits of the cytochrome b6-f complex are cytochrome b6, subunit IV (17 kDa polypeptide, petD), cytochrome f and the Rieske protein, while the 4 small subunits are PetG, PetL, PetM and PetN. The complex functions as a dimer. Heme is required as a cofactor.

It is found in the plastid. The protein resides in the chloroplast thylakoid membrane. Its function is as follows. Component of the cytochrome b6-f complex, which mediates electron transfer between photosystem II (PSII) and photosystem I (PSI), cyclic electron flow around PSI, and state transitions. The protein is Cytochrome f of Nicotiana tomentosiformis (Tobacco).